We begin with the raw amino-acid sequence, 955 residues long: Glycine dehydrogenase (decarboxylating) (955 aa).

K702 carries the N6-(pyridoxal phosphate)lysine modification.

Belongs to the GcvP family. The glycine cleavage system is composed of four proteins: P, T, L and H. Pyridoxal 5'-phosphate is required as a cofactor.

It catalyses the reaction N(6)-[(R)-lipoyl]-L-lysyl-[glycine-cleavage complex H protein] + glycine + H(+) = N(6)-[(R)-S(8)-aminomethyldihydrolipoyl]-L-lysyl-[glycine-cleavage complex H protein] + CO2. In terms of biological role, the glycine cleavage system catalyzes the degradation of glycine. The P protein binds the alpha-amino group of glycine through its pyridoxal phosphate cofactor; CO(2) is released and the remaining methylamine moiety is then transferred to the lipoamide cofactor of the H protein. The protein is Glycine dehydrogenase (decarboxylating) of Bradyrhizobium diazoefficiens (strain JCM 10833 / BCRC 13528 / IAM 13628 / NBRC 14792 / USDA 110).